Here is a 1108-residue protein sequence, read N- to C-terminus: Retinal guanylyl cyclase 1 (1108 aa).

The signal sequence occupies residues 1–54 (MSAWLLPAGGLPGAGFCVPARQSPSSFSRVLRWPRPGLPGLLLLLLLPSPSALS). The Extracellular segment spans residues 55 to 465 (AVFKVGVLGP…PDVICNGGVE (411 aa)). C108 and C136 are disulfide-bonded. N300 carries an N-linked (GlcNAc...) asparagine glycan. Residues 466-490 (PGLVFVGFLLVIGMGLTGAFLAHYL) form a helical membrane-spanning segment. The region spanning 491–811 (RHRLLHMQMA…DLTFDLFKSI (321 aa)) is the Protein kinase domain. The Cytoplasmic portion of the chain corresponds to 491-1108 (RHRLLHMQMA…KARPGQFTGK (618 aa)). The Guanylate cyclase domain occupies 883-1013 (TLYFSDIVGF…DTVNTASRME (131 aa)). Positions 1069–1108 (IPKPPDLQPGASNHGISLQEIPPERRKKLEKARPGQFTGK) are disordered.

The protein belongs to the adenylyl cyclase class-4/guanylyl cyclase family. In terms of assembly, homodimer; requires homodimerization for guanylyl cyclase activity. Interacts (via C-terminus) with RD3 (via C-terminus); promotes the exit of GUCY2E from the endoplasmic reticulum and its trafficking to the photoreceptor outer segments. Interaction with RD3 negatively regulates GUCY2E guanylate cyclase activity. There are 9 conserved cysteine residues in sensory guanylate cyclases, 6 in the extracellular domain, which may be involved in intra- or interchain disulfide bonds.

The protein resides in the photoreceptor outer segment membrane. It localises to the endoplasmic reticulum membrane. The enzyme catalyses GTP = 3',5'-cyclic GMP + diphosphate. With respect to regulation, activated by GUCA1A when free calcium ions concentration is low, and inhibited by GUCA1A when free calcium ions concentration is high. Negatively regulated by RD3; RD3 inhibits the basal and GUCA1A-stimulated guanylate cyclase activity. Functionally, catalyzes the synthesis of cyclic GMP (cGMP) in rods and cones of photoreceptors. Plays an essential role in phototransduction, by mediating cGMP replenishment. May also participate in the trafficking of membrane-asociated proteins to the photoreceptor outer segment membrane. The polypeptide is Retinal guanylyl cyclase 1 (Gucy2e) (Mus musculus (Mouse)).